The chain runs to 1543 residues: Tubby-related protein 4 (1543 aa).

7 WD repeats span residues 6–72 (EHGP…STPQ), 73–115 (RINF…YEGR), 116–158 (WSVE…SGQR), 159–237 (HWSS…SDDY), 238–276 (APPQDGPAAYPIPVQNIKPLLTVSFTSGDISLMNNYDDL), 277–334 (SPTV…GEHI), and 335–372 (FTLDTLVQRPIISICWGHRDSRLLMASGPALYVVRVEH). The region spanning 364–414 (ALYVVRVEHRVSSLQLLCQQAIASTLREDKDVSKLTLPPRLCSYLSTAFIP) is the SOCS box domain. Disordered stretches follow at residues 530–577 (SPKI…SVGS) and 829–850 (TKINPPPPYPGTIPAAPTTAAP). S577 is modified (phosphoserine). 2 positions are modified to asymmetric dimethylarginine: R945 and R950. Disordered stretches follow at residues 1004 to 1058 (SPRA…HTAS), 1326 to 1355 (VPQRTEKFGKKNRKRLDSRAEEGSVQAITE), and 1367 to 1453 (DFNS…ASEK). The segment covering 1036–1050 (TCSQCSGTGPSSQPG) has biased composition (polar residues). Over residues 1329-1347 (RTEKFGKKNRKRLDSRAEE) the composition is skewed to basic and acidic residues. A phosphoserine mark is found at S1343 and S1374. A compositionally biased stretch (basic and acidic residues) spans 1443-1453 (EEAKCRRASEK). Residues 1466 to 1543 (VMANKQPLWN…ALANVTQRLK (78 aa)) form a TUB region.

This sequence belongs to the TUB family. Expressed mainly in the brain, skeletal muscle, testis and kidney.

It is found in the cytoplasm. The protein operates within protein modification; protein ubiquitination. Its function is as follows. May be a substrate-recognition component of a SCF-like ECS (Elongin-Cullin-SOCS-box protein) E3 ubiquitin ligase complex which mediates the ubiquitination and subsequent proteasomal degradation of target proteins. This chain is Tubby-related protein 4 (TULP4), found in Homo sapiens (Human).